Reading from the N-terminus, the 326-residue chain is GTP 3',8-cyclase (326 aa).

In terms of domain architecture, Radical SAM core spans 4 to 227; it reads KHERNINYMR…LTPQKNILGN (224 aa). Residue Arg-13 coordinates GTP. Positions 20 and 24 each coordinate [4Fe-4S] cluster. Residue Tyr-26 coordinates S-adenosyl-L-methionine. Cys-27 contacts [4Fe-4S] cluster. Arg-63 provides a ligand contact to GTP. Gly-67 provides a ligand contact to S-adenosyl-L-methionine. Thr-94 contacts GTP. Ser-118 lines the S-adenosyl-L-methionine pocket. Lys-155 is a binding site for GTP. Met-189 is a binding site for S-adenosyl-L-methionine. [4Fe-4S] cluster-binding residues include Cys-253 and Cys-256. Residue 258–260 participates in GTP binding; it reads RIR. Cys-270 contributes to the [4Fe-4S] cluster binding site.

Belongs to the radical SAM superfamily. MoaA family. As to quaternary structure, monomer and homodimer. The cofactor is [4Fe-4S] cluster.

The enzyme catalyses GTP + AH2 + S-adenosyl-L-methionine = (8S)-3',8-cyclo-7,8-dihydroguanosine 5'-triphosphate + 5'-deoxyadenosine + L-methionine + A + H(+). It participates in cofactor biosynthesis; molybdopterin biosynthesis. Catalyzes the cyclization of GTP to (8S)-3',8-cyclo-7,8-dihydroguanosine 5'-triphosphate. The polypeptide is GTP 3',8-cyclase (Syntrophomonas wolfei subsp. wolfei (strain DSM 2245B / Goettingen)).